The sequence spans 160 residues: 6,7-dimethyl-8-ribityllumazine synthase (160 aa).

Residues W28, 59 to 61 (SFE), and 82 to 84 (VII) each bind 5-amino-6-(D-ribitylamino)uracil. 87 to 88 (GT) contacts (2S)-2-hydroxy-3-oxobutyl phosphate. The active-site Proton donor is the H90. F115 contacts 5-amino-6-(D-ribitylamino)uracil. (2S)-2-hydroxy-3-oxobutyl phosphate is bound at residue R129.

It belongs to the DMRL synthase family.

It catalyses the reaction (2S)-2-hydroxy-3-oxobutyl phosphate + 5-amino-6-(D-ribitylamino)uracil = 6,7-dimethyl-8-(1-D-ribityl)lumazine + phosphate + 2 H2O + H(+). Its pathway is cofactor biosynthesis; riboflavin biosynthesis; riboflavin from 2-hydroxy-3-oxobutyl phosphate and 5-amino-6-(D-ribitylamino)uracil: step 1/2. Its function is as follows. Catalyzes the formation of 6,7-dimethyl-8-ribityllumazine by condensation of 5-amino-6-(D-ribitylamino)uracil with 3,4-dihydroxy-2-butanone 4-phosphate. This is the penultimate step in the biosynthesis of riboflavin. In Clavibacter sepedonicus (Clavibacter michiganensis subsp. sepedonicus), this protein is 6,7-dimethyl-8-ribityllumazine synthase.